The sequence spans 385 residues: tRNA-specific 2-thiouridylase MnmA (385 aa).

Residues 12–19 (GLSGGVDS) and M38 each bind ATP. The tract at residues 108–110 (NPD) is interaction with target base in tRNA. The Nucleophile role is filled by C113. C113 and C210 are joined by a disulfide. An ATP-binding site is contributed by G138. The tract at residues 160–162 (KDQ) is interaction with tRNA. The active-site Cysteine persulfide intermediate is the C210.

It belongs to the MnmA/TRMU family.

The protein resides in the cytoplasm. It carries out the reaction S-sulfanyl-L-cysteinyl-[protein] + uridine(34) in tRNA + AH2 + ATP = 2-thiouridine(34) in tRNA + L-cysteinyl-[protein] + A + AMP + diphosphate + H(+). Functionally, catalyzes the 2-thiolation of uridine at the wobble position (U34) of tRNA, leading to the formation of s(2)U34. The protein is tRNA-specific 2-thiouridylase MnmA of Ureaplasma parvum serovar 3 (strain ATCC 27815 / 27 / NCTC 11736).